The following is a 510-amino-acid chain: Fumarate hydratase, mitochondrial (510 aa).

Residues 1–44 (MYRALWLLARSRRLVRPPASALASAPGLSGAAVPSFWPPNAARM) constitute a mitochondrion transit peptide. 3 positions are modified to N6-acetyllysine; alternate: Lys61, Lys66, and Lys80. An N6-succinyllysine; alternate mark is found at Lys61, Lys66, and Lys80. Phosphothreonine is present on residues Thr85 and Thr90. Lys94 is modified (N6-acetyllysine). An N6-acetyllysine; alternate mark is found at Lys115 and Lys122. 2 positions are modified to N6-succinyllysine; alternate: Lys115 and Lys122. Residues 145-147 (SGT), 176-179 (HPND), and 186-188 (SSN) each bind substrate. Residue Lys213 is modified to N6-acetyllysine. Lys223 is subject to N6-acetyllysine; alternate. Lys223 carries the N6-succinyllysine; alternate modification. Thr234 contacts substrate. Catalysis depends on His235, which acts as the Proton donor/acceptor. Thr236 carries the post-translational modification Phosphothreonine. The residue at position 256 (Lys256) is an N6-acetyllysine. Lys292 carries the N6-acetyllysine; alternate modification. Lys292 carries the N6-succinyllysine; alternate modification. Ser365 is a catalytic residue. Residues Ser366 and 371–373 (KVN) contribute to the substrate site. A Phosphoserine modification is found at Ser366. An N6-succinyllysine mark is found at Lys467 and Lys473. Residue Lys502 is modified to N6-acetyllysine.

The protein belongs to the class-II fumarase/aspartase family. Fumarase subfamily. As to quaternary structure, homotetramer. Interacts with H2AZ1. Phosphorylation at Thr-236 by PRKDC in response to DNA damage promotes translocation to the nucleus and recruitment to DNA double-strand breaks (DSBs).

It localises to the mitochondrion. Its subcellular location is the cytoplasm. It is found in the cytosol. The protein localises to the nucleus. The protein resides in the chromosome. It catalyses the reaction (S)-malate = fumarate + H2O. It participates in carbohydrate metabolism; tricarboxylic acid cycle; (S)-malate from fumarate: step 1/1. In terms of biological role, catalyzes the reversible stereospecific interconversion of fumarate to L-malate. Experiments in other species have demonstrated that specific isoforms of this protein act in defined pathways and favor one direction over the other. Functionally, catalyzes the hydration of fumarate to L-malate in the tricarboxylic acid (TCA) cycle to facilitate a transition step in the production of energy in the form of NADH. Its function is as follows. Catalyzes the dehydration of L-malate to fumarate. Fumarate metabolism in the cytosol plays a role during urea cycle and arginine metabolism; fumarate being a by-product of the urea cycle and amino-acid catabolism. Also plays a role in DNA repair by promoting non-homologous end-joining (NHEJ). In response to DNA damage and phosphorylation by PRKDC, translocates to the nucleus and accumulates at DNA double-strand breaks (DSBs): acts by catalyzing formation of fumarate, an inhibitor of KDM2B histone demethylase activity, resulting in enhanced dimethylation of histone H3 'Lys-36' (H3K36me2). In Macaca fascicularis (Crab-eating macaque), this protein is Fumarate hydratase, mitochondrial.